A 413-amino-acid chain; its full sequence is MHSTTRREWLGAIGATAATGLAGCAGVGGAGQPVTVGSLLPLSGPGSLGALAADHQRAIDTAVEHANRGGGINGRDVVHVSKDTEADPSVAADRYATLAADESPLAIVGPVLSGVTTALTEQAAADAQLLVSPSTTAPAIATAGRSDGQKFVARTCPNDSQQAAVMAKIVDDDMYAAADTATILYVDNAFGAALADVLADRLGADLLASVPYQGGTDTPGGPVDDALAPDPDAVAFIGSPGSSSGVIDELVGREYGGEIALSSALASASSPPSWNGAYTATVNSASTVGTKRLRRALSDATPLQPYTENAYDAAALALLAASYSGDPTPRAVAGALQSVSGGVGHSITVGDFGRATDLIDAGRELNYNGATGNVDLTAALEPVTGYLIQQLTDAGIETRELLKSGYFTDGGDA.

Residues 1–31 (MHSTTRREWLGAIGATAATGLAGCAGVGGAG) form the signal peptide.

It is found in the cell membrane. Its function is as follows. Mediates chemotaxis towards five attractant amino acids (leucine, isoleucine, valine, methionine and cysteine). May function as a receptor that binds the amino acids and transduces a signal to BasT. Has probably no additional role in transport. The chain is Chemotactic signal transduction system substrate-binding protein BasB (basB) from Halobacterium salinarum (strain ATCC 29341 / DSM 671 / R1).